We begin with the raw amino-acid sequence, 852 residues long: DNA mismatch repair protein MutS (852 aa).

An ATP-binding site is contributed by 615 to 622 (GPNMAGKS).

Belongs to the DNA mismatch repair MutS family.

Functionally, this protein is involved in the repair of mismatches in DNA. It is possible that it carries out the mismatch recognition step. This protein has a weak ATPase activity. In Thermodesulfovibrio yellowstonii (strain ATCC 51303 / DSM 11347 / YP87), this protein is DNA mismatch repair protein MutS.